The chain runs to 90 residues: UPF0237 protein NMB1653 (90 aa).

The region spanning 5 to 83 (VITVIGKDRV…LDIRMQNEEI (79 aa)) is the ACT domain.

Belongs to the UPF0237 family.

This chain is UPF0237 protein NMB1653, found in Neisseria meningitidis serogroup B (strain ATCC BAA-335 / MC58).